Consider the following 309-residue polypeptide: Porphobilinogen deaminase (309 aa).

Cysteine 242 carries the post-translational modification S-(dipyrrolylmethanemethyl)cysteine.

It belongs to the HMBS family. As to quaternary structure, monomer. Dipyrromethane is required as a cofactor.

The enzyme catalyses 4 porphobilinogen + H2O = hydroxymethylbilane + 4 NH4(+). The protein operates within porphyrin-containing compound metabolism; protoporphyrin-IX biosynthesis; coproporphyrinogen-III from 5-aminolevulinate: step 2/4. In terms of biological role, tetrapolymerization of the monopyrrole PBG into the hydroxymethylbilane pre-uroporphyrinogen in several discrete steps. The protein is Porphobilinogen deaminase of Shewanella sediminis (strain HAW-EB3).